The chain runs to 397 residues: Tryptophan synthase beta chain 1 (397 aa).

Position 90 is an N6-(pyridoxal phosphate)lysine (lysine 90).

This sequence belongs to the TrpB family. Tetramer of two alpha and two beta chains. Requires pyridoxal 5'-phosphate as cofactor.

It carries out the reaction (1S,2R)-1-C-(indol-3-yl)glycerol 3-phosphate + L-serine = D-glyceraldehyde 3-phosphate + L-tryptophan + H2O. It participates in amino-acid biosynthesis; L-tryptophan biosynthesis; L-tryptophan from chorismate: step 5/5. Functionally, the beta subunit is responsible for the synthesis of L-tryptophan from indole and L-serine. This is Tryptophan synthase beta chain 1 (trpB1) from Aquifex aeolicus (strain VF5).